The chain runs to 198 residues: Ribonuclease HII (198 aa).

Residues 10-198 form the RNase H type-2 domain; the sequence is QLVAGVDEVG…PVKRALGLAS (189 aa). Residues Asp16, Glu17, and Asp108 each coordinate a divalent metal cation.

Belongs to the RNase HII family. Mn(2+) is required as a cofactor. The cofactor is Mg(2+).

The protein resides in the cytoplasm. It catalyses the reaction Endonucleolytic cleavage to 5'-phosphomonoester.. Its function is as follows. Endonuclease that specifically degrades the RNA of RNA-DNA hybrids. This is Ribonuclease HII from Shigella boydii serotype 18 (strain CDC 3083-94 / BS512).